A 343-amino-acid chain; its full sequence is MTNFYKVFLAVFILVCCNISHAAVSFIGSTENDVGPSQGSYSSTHAMDNLPFVYNTGYNIGYQNANVWRISGGFCVGLDGKVDLPVVGSLDGQSIYGLTEEVGLLIWMGDTNYSRGTAMSGNSWENVFSGWCVGNYVSTQGLSVHVRPVILKRNSSAQYSVQKTSIGSIRMRPYNGSSAGSVQTTVNFSLNPFTLNDTVTSCRLLTPSAVNVSLAAISAGQLPSSGDEVVAGTTSLKLQCDAGVTVWATLTDATTPSNRSDILTLTGASTATGVGLRIYKNTDSTPLKFGPDSPVKGNENQWQLSTGTETSPSVRLYVKYVNTGEGINPGTVNGISTFTFSYQ.

A signal peptide spans 1 to 22 (MTNFYKVFLAVFILVCCNISHA). The receptor-binding lectin domain stretch occupies residues 23–199 (AVSFIGSTEN…LNPFTLNDTV (177 aa)). A carbohydrate-binding positions include 65 to 66 (AN), 110 to 111 (DT), and 138 to 141 (STQG). Cys-75 and Cys-132 are joined by a disulfide. The tract at residues 200-343 (TSCRLLTPSA…GISTFTFSYQ (144 aa)) is fimbrillin-binding domain. Residues 287-307 (LKFGPDSPVKGNENQWQLSTG) form a disordered region. A compositionally biased stretch (polar residues) spans 298–307 (NENQWQLSTG).

It belongs to the fimbrial protein family.

The protein localises to the fimbrium. Essential fimbrial adhesion factor that mediates binding to N-acetylglucosamine-containing receptors in the host intestinal microvilli, leading to colonization of the intestinal tissue, and diarrhea or septicemia. Also confers adhesiveness to laminin and basement membranes. The protein is F17c-G fimbrial adhesin (f17cG) of Escherichia coli.